The chain runs to 451 residues: Endosomal transmembrane epsin interactor 1 (451 aa).

An N-terminal signal peptide occupies residues 1–29; it reads MILLVNLFVLLSVVCILLNLAGFILGCQG. Residues 30–85 are Lumenal-facing; the sequence is AQFVSSVPRCDLVDLGEGKICFCCEEFQPAKCTDKENALKLFPVQPCSAVHLLLKK. A helical transmembrane segment spans residues 86 to 106; it reads VLFALCALNALTTTVCLVAAA. The Cytoplasmic segment spans residues 107–451; that stretch reads LRYLQIFASR…LIGVIRETVL (345 aa). Positions 107 to 451 are mediates interaction with EPN1; the sequence is LRYLQIFASR…LIGVIRETVL (345 aa). 2 consecutive short sequence motifs (PPxY; mediates interaction with ITCH) follow at residues 148–151 and 194–197; these read PPSY and PPPY. Residues 204-213 are compositionally biased toward polar residues; sequence TDQEQESSFQ. The interval 204 to 224 is disordered; sequence TDQEQESSFQMPEGPETAASP. Lysine 274 is covalently cross-linked (Glycyl lysine isopeptide (Lys-Gly) (interchain with G-Cter in ubiquitin)). At serine 275 the chain carries Phosphoserine. Lysine 365 participates in a covalent cross-link: Glycyl lysine isopeptide (Lys-Gly) (interchain with G-Cter in ubiquitin).

Belongs to the ENTREP family. Interacts with ITCH; enhances the ubiquitination of CXCR4 by ITCH and the subsequent endocytosis and desensitization of the receptor. Interacts with EPN1.

The protein localises to the early endosome membrane. It localises to the late endosome membrane. Its subcellular location is the recycling endosome membrane. The protein resides in the cell membrane. Its function is as follows. Functions as an activator of the E3 ubiquitin protein ligase ITCH in the ubiquitination of the CXCL12-activated CXCR4 receptor. Thereby, triggers CXCR4 endocytosis and desensitization, negatively regulating the CXCL12/CXCR4 signaling pathway. In Mus musculus (Mouse), this protein is Endosomal transmembrane epsin interactor 1.